The sequence spans 323 residues: Mitochondrial glutamate carrier 1 (323 aa).

3 Solcar repeats span residues I6–Q93, L101–L214, and S223–E312. Transmembrane regions (helical) follow at residues L12 to A32, Y62 to I82, M107 to L127, G189 to A209, S223 to V243, and A292 to E312.

It belongs to the mitochondrial carrier (TC 2.A.29) family. Expressed at high levels in brain, liver, and pancreas.

It localises to the mitochondrion inner membrane. The enzyme catalyses L-glutamate(in) + H(+)(in) = L-glutamate(out) + H(+)(out). Mitochondrial glutamate/H(+) symporter. Responsible for the transport of glutamate from the cytosol into the mitochondrial matrix with the concomitant import of a proton. Plays a role in the control of glucose-stimulated insulin secretion. This is Mitochondrial glutamate carrier 1 from Homo sapiens (Human).